Here is a 496-residue protein sequence, read N- to C-terminus: 6-phosphogluconate dehydrogenase, decarboxylating (496 aa).

Residues 13-18, 24-26, 68-70, and Asn96 contribute to the NADP(+) site; these read GLDVSI, DNV, and ITH. Residues Asn96 and 122–124 each bind substrate; that span reads SGG. The active-site Proton acceptor is the Lys178. Residue 181–182 coordinates substrate; that stretch reads HN. Glu185 functions as the Proton donor in the catalytic mechanism. 2 residues coordinate substrate: Arg300 and His468. Residues 476–496 are disordered; the sequence is PGEDPGPVSKGPHHYEWRPAK.

This sequence belongs to the 6-phosphogluconate dehydrogenase family. As to quaternary structure, homodimer.

It localises to the cytoplasm. The catalysed reaction is 6-phospho-D-gluconate + NADP(+) = D-ribulose 5-phosphate + CO2 + NADPH. The protein operates within carbohydrate degradation; pentose phosphate pathway; D-ribulose 5-phosphate from D-glucose 6-phosphate (oxidative stage): step 3/3. Functionally, catalyzes the oxidative decarboxylation of 6-phosphogluconate to ribulose 5-phosphate and CO(2), with concomitant reduction of NADP to NADPH. This Emericella nidulans (strain FGSC A4 / ATCC 38163 / CBS 112.46 / NRRL 194 / M139) (Aspergillus nidulans) protein is 6-phosphogluconate dehydrogenase, decarboxylating.